Consider the following 275-residue polypeptide: Diaminopimelate epimerase (275 aa).

Substrate contacts are provided by Asn-12, Gln-45, and Asn-65. The active-site Proton donor is Cys-74. Substrate contacts are provided by residues 75-76 (GN), Asn-158, Asn-191, and 209-210 (ER). Cys-218 serves as the catalytic Proton acceptor. A substrate-binding site is contributed by 219 to 220 (GT).

The protein belongs to the diaminopimelate epimerase family. Homodimer.

The protein resides in the cytoplasm. It catalyses the reaction (2S,6S)-2,6-diaminopimelate = meso-2,6-diaminopimelate. It participates in amino-acid biosynthesis; L-lysine biosynthesis via DAP pathway; DL-2,6-diaminopimelate from LL-2,6-diaminopimelate: step 1/1. In terms of biological role, catalyzes the stereoinversion of LL-2,6-diaminopimelate (L,L-DAP) to meso-diaminopimelate (meso-DAP), a precursor of L-lysine and an essential component of the bacterial peptidoglycan. The sequence is that of Diaminopimelate epimerase from Shewanella putrefaciens (strain CN-32 / ATCC BAA-453).